Consider the following 96-residue polypeptide: Large ribosomal subunit protein bL28 (96 aa).

The protein belongs to the bacterial ribosomal protein bL28 family.

The polypeptide is Large ribosomal subunit protein bL28 (Methylobacterium sp. (strain 4-46)).